We begin with the raw amino-acid sequence, 103 residues long: Small ribosomal subunit protein uS10 (103 aa).

Belongs to the universal ribosomal protein uS10 family. In terms of assembly, part of the 30S ribosomal subunit.

Involved in the binding of tRNA to the ribosomes. This is Small ribosomal subunit protein uS10 from Alteromonas mediterranea (strain DSM 17117 / CIP 110805 / LMG 28347 / Deep ecotype).